The following is a 310-amino-acid chain: p-hydroxybenzoic acid efflux pump subunit AaeA (310 aa).

Residues 12–32 (AITLVLVILAFIAIFRAWVYY) traverse the membrane as a helical segment.

This sequence belongs to the membrane fusion protein (MFP) (TC 8.A.1) family.

It localises to the cell inner membrane. Its function is as follows. Forms an efflux pump with AaeB. This Salmonella gallinarum (strain 287/91 / NCTC 13346) protein is p-hydroxybenzoic acid efflux pump subunit AaeA.